Consider the following 66-residue polypeptide: Beta-defensin 107A (66 aa).

Residues 1 to 22 (MKIFFFIFAALILLAQIFQART) form the signal peptide. Cystine bridges form between C37-C51 and C41-C60.

This sequence belongs to the beta-defensin family.

It localises to the secreted. Has antibacterial activity. This chain is Beta-defensin 107A (DEFB107A), found in Hylobates lar (Lar gibbon).